The chain runs to 1378 residues: Cell surface hyaluronidase (1378 aa).

The disordered stretch occupies residues M1–Q77. Residues M1–T82 are Cytoplasmic-facing. Positions R36–R58 are enriched in pro residues. Residues Y83–L103 form a helical; Signal-anchor for type II membrane protein membrane-spanning segment. The Extracellular portion of the chain corresponds to T104–S1378. The G8 domain maps to R121–R247. N171, N264, N360, N527, and N639 each carry an N-linked (GlcNAc...) asparagine glycan. Positions G257–A414 constitute a GG-type lectin 1 domain. Residues H672–F694 form a PbH1 1 repeat. The N-linked (GlcNAc...) asparagine glycan is linked to N696. A PbH1 2 repeat occupies T714–R736. N-linked (GlcNAc...) asparagine glycans are attached at residues N742, N854, N905, N996, N1069, N1160, and N1221. The region spanning N1203–K1363 is the GG-type lectin 2 domain.

The protein belongs to the CEMIP family. Ca(2+) is required as a cofactor.

It is found in the cell membrane. The enzyme catalyses Random hydrolysis of (1-&gt;4)-linkages between N-acetyl-beta-D-glucosamine and D-glucuronate residues in hyaluronate.. Cell surface hyaluronidase that mediates the initial cleavage of extracellular high-molecular-weight hyaluronan into intermediate-size hyaluronan. Acts as a regulator of angiogenesis in embryos by mediating degradation of extracellular hyaluronan, thereby promoting VEGF signaling. Acts as a regulator of heart development during myocardial and endocardial morphogenesis: involved in the looping stage of heart morphogenesis. Stimulates migration of endocardial cells and increases both myocardial and endocardial fusion. Involved in the restriction of endocardial cushions (ECs) formation to the atrioventricular canal (AVC). Also required for muscle fiber attachment. Is very specific to hyaluronan; not able to cleave chondroitin sulfate or dermatan sulfate. The polypeptide is Cell surface hyaluronidase (cemip2) (Danio rerio (Zebrafish)).